The following is a 790-amino-acid chain: Vacuolar protein sorting-associated protein 35C (790 aa).

Methionine 1 carries the post-translational modification N-acetylmethionine.

The protein belongs to the VPS35 family. Component of the retromer complex which consists of VPS29 (MAG1), VPS26 (VPS26A or VPS26B), VPS35 (VPS35A or VPS35B or VPS35C), VPS5/17 (SNX1 or SNX2A or SNX2B). Component of a retromer subcomplex consisting of VPS29 (MAG1), VPS26 (VPS26A or VPS26B), VPS35 (VPS35A or VPS35B or VPS35C).

The protein resides in the cytoplasm. Its subcellular location is the endosome membrane. It is found in the prevacuolar compartment membrane. It localises to the golgi apparatus. The protein localises to the trans-Golgi network membrane. In terms of biological role, plays a role in vesicular protein sorting. Component of the membrane-associated retromer complex which is essential in endosome-to-Golgi retrograde transport. Also involved in the efficient sorting of seed storage proteins. The VPS29-VPS26-VPS35 subcomplex may be involved in recycling of specific cargos from endosome to the plasma membrane. This Arabidopsis thaliana (Mouse-ear cress) protein is Vacuolar protein sorting-associated protein 35C (VPS35C).